The chain runs to 35 residues: Potassium channel toxin alpha-KTx 6.15 (35 aa).

Disulfide bonds link cysteine 3-cysteine 24, cysteine 9-cysteine 29, cysteine 13-cysteine 31, and cysteine 19-cysteine 34.

Belongs to the short scorpion toxin superfamily. Potassium channel inhibitor family. Alpha-KTx 06 subfamily. In terms of tissue distribution, expressed by the venom gland.

Its subcellular location is the secreted. Functionally, blocks voltage-gated potassium channels rKv1.1/KCNA1 (IC(50)=13 nM), rKv1.2/KCNA2 (IC(50)=16 nM) and rKv1.3/KCNA3 (IC(50)=2 nM). The polypeptide is Potassium channel toxin alpha-KTx 6.15 (Hemiscorpius lepturus (Scorpion)).